A 370-amino-acid polypeptide reads, in one-letter code: Histidinol-phosphate aminotransferase 1 (370 aa).

The residue at position 222 (Lys-222) is an N6-(pyridoxal phosphate)lysine.

The protein belongs to the class-II pyridoxal-phosphate-dependent aminotransferase family. Histidinol-phosphate aminotransferase subfamily. Homodimer. Pyridoxal 5'-phosphate is required as a cofactor.

It catalyses the reaction L-histidinol phosphate + 2-oxoglutarate = 3-(imidazol-4-yl)-2-oxopropyl phosphate + L-glutamate. Its pathway is amino-acid biosynthesis; L-histidine biosynthesis; L-histidine from 5-phospho-alpha-D-ribose 1-diphosphate: step 7/9. This Bacillus cereus (strain ZK / E33L) protein is Histidinol-phosphate aminotransferase 1.